A 494-amino-acid chain; its full sequence is UPF0371 protein spr0309 (494 aa).

It belongs to the UPF0371 family.

The chain is UPF0371 protein spr0309 from Streptococcus pneumoniae (strain ATCC BAA-255 / R6).